We begin with the raw amino-acid sequence, 357 residues long: Phosphoribosylformylglycinamidine cyclo-ligase (357 aa).

Belongs to the AIR synthase family.

The protein resides in the cytoplasm. The catalysed reaction is 2-formamido-N(1)-(5-O-phospho-beta-D-ribosyl)acetamidine + ATP = 5-amino-1-(5-phospho-beta-D-ribosyl)imidazole + ADP + phosphate + H(+). Its pathway is purine metabolism; IMP biosynthesis via de novo pathway; 5-amino-1-(5-phospho-D-ribosyl)imidazole from N(2)-formyl-N(1)-(5-phospho-D-ribosyl)glycinamide: step 2/2. This chain is Phosphoribosylformylglycinamidine cyclo-ligase, found in Rhizobium rhizogenes (strain K84 / ATCC BAA-868) (Agrobacterium radiobacter).